Reading from the N-terminus, the 22-residue chain is Unknown protein 20 from 2D-PAGE (22 aa).

The sequence is that of Unknown protein 20 from 2D-PAGE from Bombyx mori (Silk moth).